The sequence spans 327 residues: Guanine nucleotide-binding protein subunit beta-like protein 1 (327 aa).

7 WD repeats span residues 16–54 (LRGTQSPVHALHFCEGAQAQGRPLLFSGSQSGLVHIWSL), 58–97 (RAVTTLDGHGGQCVTWLQTLPQGRQLLSQGRDLKLCLWDL), 103–145 (AVVD…ILEM), 153–195 (ALKP…LWDV), 200–237 (VCSRIACHEEPVMDLDFDSQKARGISGSAGKALAVWSL), 242–282 (ALQV…VFHW), and 286–323 (QPLAVLAFHSAAVQCVAFTADGLLAAGSKDQRISLWSL).

In terms of tissue distribution, ubiquitous. Highly expressed in heart, liver, skeletal muscle, kidney, spleen, thymus and pancreas. Detected at low levels in lung, placenta and brain.

It localises to the cytoplasm. Its subcellular location is the nucleus. Functionally, acts as a critical regulator of DNA damage response (DDR) signaling via specifically regulating phosphatidylinositol 3-kinase-related protein kinase (PIKK) family proteins. The polypeptide is Guanine nucleotide-binding protein subunit beta-like protein 1 (Homo sapiens (Human)).